Here is a 118-residue protein sequence, read N- to C-terminus: MARIAGVNIPDNKHAVISLTYVYGIGRTTAKQICAATGIAEDTKIGTLSEEQMDAIRAEVGKHTVEGDLRREINMNIKRLMDLGCYRGLRHRRGLPLRGQRTKTNARTRKGPRKPIKK.

Residues 94 to 118 (GLPLRGQRTKTNARTRKGPRKPIKK) form a disordered region.

This sequence belongs to the universal ribosomal protein uS13 family. In terms of assembly, part of the 30S ribosomal subunit. Forms a loose heterodimer with protein S19. Forms two bridges to the 50S subunit in the 70S ribosome.

In terms of biological role, located at the top of the head of the 30S subunit, it contacts several helices of the 16S rRNA. In the 70S ribosome it contacts the 23S rRNA (bridge B1a) and protein L5 of the 50S subunit (bridge B1b), connecting the 2 subunits; these bridges are implicated in subunit movement. Contacts the tRNAs in the A and P-sites. This is Small ribosomal subunit protein uS13 from Cellvibrio japonicus (strain Ueda107) (Pseudomonas fluorescens subsp. cellulosa).